The chain runs to 544 residues: Putative ligase Rv1013 (544 aa).

An Isoglutamyl lysine isopeptide (Lys-Gln) (interchain with Q-Cter in protein Pup) cross-link involves residue lysine 528.

The protein belongs to the ATP-dependent AMP-binding enzyme family. Pupylated at Lys-528 by the prokaryotic ubiquitin-like protein Pup, which probably leads to its degradation by the proteasome.

In Mycobacterium tuberculosis (strain ATCC 25618 / H37Rv), this protein is Putative ligase Rv1013 (pks16).